A 429-amino-acid polypeptide reads, in one-letter code: Enolase (429 aa).

Glutamine 167 provides a ligand contact to (2R)-2-phosphoglycerate. The Proton donor role is filled by glutamate 209. Mg(2+) is bound by residues aspartate 246, glutamate 289, and aspartate 316. (2R)-2-phosphoglycerate-binding residues include lysine 341, arginine 370, serine 371, and lysine 392. Lysine 341 serves as the catalytic Proton acceptor.

This sequence belongs to the enolase family. In terms of assembly, component of the RNA degradosome, a multiprotein complex involved in RNA processing and mRNA degradation. The cofactor is Mg(2+).

It localises to the cytoplasm. Its subcellular location is the secreted. The protein localises to the cell surface. It catalyses the reaction (2R)-2-phosphoglycerate = phosphoenolpyruvate + H2O. Its pathway is carbohydrate degradation; glycolysis; pyruvate from D-glyceraldehyde 3-phosphate: step 4/5. Catalyzes the reversible conversion of 2-phosphoglycerate (2-PG) into phosphoenolpyruvate (PEP). It is essential for the degradation of carbohydrates via glycolysis. This chain is Enolase, found in Cellvibrio japonicus (strain Ueda107) (Pseudomonas fluorescens subsp. cellulosa).